Here is a 376-residue protein sequence, read N- to C-terminus: MAPKKTATKATAAKGNDRQKALDAALALIEKDFGKGAVMRLGDENRPPIQTISSGNTAIDIALGIGGFPRGRIVEVYGPESSGKTTVALHAIAQAQKAGGIAAFIDAEHALDPDYARKLGVDTDALLVSQPDTGEQALEIADMLVRSGAIDIIVIDSVAALTPKAEIEGEMGDSHVGLQARLMSQALRKMTGALYNSGTTAIFINQLREKIGVMFGSPETTTGGKALKFYASVRCDIRRIQTLKDGQDAIGNRTRLKVVKNKVSPPFKIAEFDIMYGEGISRESSVIDLAVDNGIVKKSGSWFTYEGEQLGQGKEKVRLSLKENPELTDELEDKIFKKLGVGKYAAASDELTDDPVELVPNVDFDDEADTEADAED.

Position 78–85 (78–85) interacts with ATP; the sequence is GPESSGKT. The segment at 355-376 is disordered; that stretch reads PVELVPNVDFDDEADTEADAED. A compositionally biased stretch (acidic residues) spans 363–376; sequence DFDDEADTEADAED.

This sequence belongs to the RecA family.

The protein resides in the cytoplasm. In terms of biological role, can catalyze the hydrolysis of ATP in the presence of single-stranded DNA, the ATP-dependent uptake of single-stranded DNA by duplex DNA, and the ATP-dependent hybridization of homologous single-stranded DNAs. It interacts with LexA causing its activation and leading to its autocatalytic cleavage. This chain is Protein RecA, found in Corynebacterium glutamicum (strain R).